The following is a 286-amino-acid chain: UDP-3-O-acyl-N-acetylglucosamine deacetylase (286 aa).

Zn(2+)-binding residues include His-79, His-237, and Asp-241. His-264 functions as the Proton donor in the catalytic mechanism.

It belongs to the LpxC family. Requires Zn(2+) as cofactor.

The enzyme catalyses a UDP-3-O-[(3R)-3-hydroxyacyl]-N-acetyl-alpha-D-glucosamine + H2O = a UDP-3-O-[(3R)-3-hydroxyacyl]-alpha-D-glucosamine + acetate. Its pathway is glycolipid biosynthesis; lipid IV(A) biosynthesis; lipid IV(A) from (3R)-3-hydroxytetradecanoyl-[acyl-carrier-protein] and UDP-N-acetyl-alpha-D-glucosamine: step 2/6. In terms of biological role, catalyzes the hydrolysis of UDP-3-O-myristoyl-N-acetylglucosamine to form UDP-3-O-myristoylglucosamine and acetate, the committed step in lipid A biosynthesis. The protein is UDP-3-O-acyl-N-acetylglucosamine deacetylase of Chlamydia muridarum (strain MoPn / Nigg).